Reading from the N-terminus, the 136-residue chain is Keratin-associated protein 4-2 (136 aa).

Tandem repeats lie at residues 5-9 (CCGSV), 20-24 (CCRPS), 25-29 (CCQTT), 30-34 (CCRTT), 35-39 (CCRPS), 40-44 (CCVSS), 45-49 (CCRPQ), 50-54 (CCQSV), 55-59 (CCQPT), 60-64 (CCSPS), 65-69 (CCQTT), 70-74 (CCRTT), 75-79 (CCRPS), 80-84 (CCVSS), 90-94 (CCQSV), 95-99 (YCQPT), 100-104 (CCRPS), 110-114 (CCRTT), 120-124 (CCVST), and 125-129 (CCRPT). The segment at 5-129 (CCGSVCSDQG…CCVSTCCRPT (125 aa)) is 20 X 5 AA repeats OF C-C-[GRQVS]-[SPT]-[VSTQ].

It belongs to the KRTAP type 4 family. Interacts with hair keratins.

Functionally, in the hair cortex, hair keratin intermediate filaments are embedded in an interfilamentous matrix, consisting of hair keratin-associated proteins (KRTAP), which are essential for the formation of a rigid and resistant hair shaft through their extensive disulfide bond cross-linking with abundant cysteine residues of hair keratins. The matrix proteins include the high-sulfur and high-glycine-tyrosine keratins. This is Keratin-associated protein 4-2 (KRTAP4-2) from Homo sapiens (Human).